A 210-amino-acid chain; its full sequence is Proteasome subunit beta (210 aa).

Residues 1-9 (MNDKNTLKG) constitute a propeptide, removed in mature form; by autocatalysis. Thr10 acts as the Nucleophile in catalysis.

This sequence belongs to the peptidase T1B family. In terms of assembly, the 20S proteasome core is composed of 14 alpha and 14 beta subunits that assemble into four stacked heptameric rings, resulting in a barrel-shaped structure. The two inner rings, each composed of seven catalytic beta subunits, are sandwiched by two outer rings, each composed of seven alpha subunits. The catalytic chamber with the active sites is on the inside of the barrel. Has a gated structure, the ends of the cylinder being occluded by the N-termini of the alpha-subunits. Is capped at one or both ends by the proteasome regulatory ATPase, PAN.

The protein localises to the cytoplasm. The catalysed reaction is Cleavage of peptide bonds with very broad specificity.. With respect to regulation, the formation of the proteasomal ATPase PAN-20S proteasome complex, via the docking of the C-termini of PAN into the intersubunit pockets in the alpha-rings, triggers opening of the gate for substrate entry. Interconversion between the open-gate and close-gate conformations leads to a dynamic regulation of the 20S proteasome proteolysis activity. Functionally, component of the proteasome core, a large protease complex with broad specificity involved in protein degradation. The sequence is that of Proteasome subunit beta from Methanothermobacter thermautotrophicus (strain ATCC 29096 / DSM 1053 / JCM 10044 / NBRC 100330 / Delta H) (Methanobacterium thermoautotrophicum).